A 452-amino-acid chain; its full sequence is Probable alpha-galactosidase B (452 aa).

The N-terminal stretch at 1–24 (MLHRATTTAAAAAAAALLLCPVQA) is a signal peptide. A disulfide bridge links Cys47 with Cys79. Asn87 and Asn138 each carry an N-linked (GlcNAc...) asparagine glycan. Cys129 and Cys159 are joined by a disulfide. Asp157 serves as the catalytic Nucleophile. An N-linked (GlcNAc...) asparagine glycan is attached at Asn184. Substrate is bound at residue 231-235 (DWGQA). The Proton donor role is filled by Asp253. N-linked (GlcNAc...) asparagine glycans are attached at residues Asn292, Asn391, Asn409, and Asn410.

This sequence belongs to the glycosyl hydrolase 27 family.

It is found in the secreted. It catalyses the reaction Hydrolysis of terminal, non-reducing alpha-D-galactose residues in alpha-D-galactosides, including galactose oligosaccharides, galactomannans and galactolipids.. In terms of biological role, hydrolyzes a variety of simple alpha-D-galactoside as well as more complex molecules such as oligosaccharides and polysaccharides. The polypeptide is Probable alpha-galactosidase B (Talaromyces emersonii (Thermophilic fungus)).